The following is a 172-amino-acid chain: Probable chorismate pyruvate-lyase (172 aa).

M37, R79, L117, and E158 together coordinate substrate.

This sequence belongs to the UbiC family.

It is found in the cytoplasm. The enzyme catalyses chorismate = 4-hydroxybenzoate + pyruvate. It participates in cofactor biosynthesis; ubiquinone biosynthesis. Its function is as follows. Removes the pyruvyl group from chorismate, with concomitant aromatization of the ring, to provide 4-hydroxybenzoate (4HB) for the ubiquinone pathway. This Bartonella quintana (strain Toulouse) (Rochalimaea quintana) protein is Probable chorismate pyruvate-lyase.